The chain runs to 172 residues: Stellate protein CG33236/CG33240/CG33244/CG33245 (172 aa).

The protein belongs to the casein kinase 2 subunit beta family. In terms of assembly, interacts in vitro with the casein kinase 2 alpha subunit (CkII-alpha). The relevance of such interaction is however unclear in vivo. In terms of tissue distribution, probably not expressed in wild-type flies. In males lacking the Y chromosome, it is testis-specific and constitutes the main component of star-shaped crystals.

In terms of biological role, unknown. In males lacking the Y chromosome, its strong overexpression leads to the appearance of proteinaceous star-shaped crystals in the primary spermatocytes causing meiotic drive, possibly by interfering with normal casein kinase 2 activity. This chain is Stellate protein CG33236/CG33240/CG33244/CG33245 (Ste:CG33236), found in Drosophila melanogaster (Fruit fly).